The following is a 558-amino-acid chain: Type I restriction enzyme MjaIX methylase subunit (558 aa).

Positions 1 to 37 (MATLDKFLSIKENDEKTKKKESKKKSSKSNKTSESLV) are disordered. Residues 8–18 (LSIKENDEKTK) are compositionally biased toward basic and acidic residues. Basic residues predominate over residues 19-28 (KKESKKKSSK). S-adenosyl-L-methionine is bound by residues 227–232 (KFYTPR), 256–258 (SGG), and D283.

It belongs to the N(4)/N(6)-methyltransferase family. In terms of assembly, the type I restriction/modification system is composed of three polypeptides R, M and S.

It carries out the reaction a 2'-deoxyadenosine in DNA + S-adenosyl-L-methionine = an N(6)-methyl-2'-deoxyadenosine in DNA + S-adenosyl-L-homocysteine + H(+). Its function is as follows. The subtype gamma methyltransferase (M) subunit of a type I restriction enzyme. The M and S subunits together form a methyltransferase (MTase) that methylates A-3 on the top and A-2 on the bottom strand of the sequence 5'-CCAN(5)GTR-3'. In the presence of the R subunit the complex can also act as an endonuclease, binding to the same target sequence but cutting the DNA some distance from this site. Whether the DNA is cut or modified depends on the methylation state of the target sequence. When the target site is unmodified, the DNA is cut. When the target site is hemimethylated, the complex acts as a maintenance MTase modifying the DNA so that both strands become methylated. After locating a non-methylated recognition site, the enzyme complex serves as a molecular motor that translocates DNA in an ATP-dependent manner until a collision occurs that triggers cleavage. In Methanocaldococcus jannaschii (strain ATCC 43067 / DSM 2661 / JAL-1 / JCM 10045 / NBRC 100440) (Methanococcus jannaschii), this protein is Type I restriction enzyme MjaIX methylase subunit.